A 109-amino-acid chain; its full sequence is Putative double-stranded DNA mimic protein YciU (109 aa).

The protein belongs to the putative dsDNA mimic protein family.

Its function is as follows. May act as a double-stranded DNA (dsDNA) mimic. Probably regulates the activity of a dsDNA-binding protein. The polypeptide is Putative double-stranded DNA mimic protein YciU (Salmonella paratyphi B (strain ATCC BAA-1250 / SPB7)).